Here is a 227-residue protein sequence, read N- to C-terminus: General transcription factor 3C polypeptide 6 (227 aa).

The segment at 157–227 (DEAAGPASDK…DGNVSQNNQS (71 aa)) is disordered. Residues 186–195 (EQEKVEHSEV) are compositionally biased toward basic and acidic residues. Over residues 203 to 227 (ETPSEMESSVFMGTQDGNVSQNNQS) the composition is skewed to polar residues.

It belongs to the TFIIIC subunit 6 family. Part of the TFIIIC subcomplex TFIIIC2, consisting of six subunits, GTF3C1, GTF3C2, GTF3C3, GTF3C4, GTF3C5 and GTF3C6. Interacts with GTF3C4 and GTF3C5.

It localises to the nucleus. Functionally, involved in RNA polymerase III-mediated transcription. Integral, tightly associated component of the DNA-binding TFIIIC2 subcomplex that directly binds tRNA and virus-associated RNA promoters. The chain is General transcription factor 3C polypeptide 6 from Mus musculus (Mouse).